A 135-amino-acid polypeptide reads, in one-letter code: S-adenosylmethionine decarboxylase proenzyme (135 aa).

Ser-64 (schiff-base intermediate with substrate; via pyruvic acid) is an active-site residue. Position 64 is a pyruvic acid (Ser); by autocatalysis (Ser-64). His-69 (proton acceptor; for processing activity) is an active-site residue. Cys-84 serves as the catalytic Proton donor; for catalytic activity.

Belongs to the prokaryotic AdoMetDC family. Type 1 subfamily. As to quaternary structure, heterotetramer of two alpha and two beta chains arranged as a dimer of alpha/beta heterodimers. Pyruvate serves as cofactor. In terms of processing, is synthesized initially as an inactive proenzyme. Formation of the active enzyme involves a self-maturation process in which the active site pyruvoyl group is generated from an internal serine residue via an autocatalytic post-translational modification. Two non-identical subunits are generated from the proenzyme in this reaction, and the pyruvate is formed at the N-terminus of the alpha chain, which is derived from the carboxyl end of the proenzyme. The post-translation cleavage follows an unusual pathway, termed non-hydrolytic serinolysis, in which the side chain hydroxyl group of the serine supplies its oxygen atom to form the C-terminus of the beta chain, while the remainder of the serine residue undergoes an oxidative deamination to produce ammonia and the pyruvoyl group blocking the N-terminus of the alpha chain.

The enzyme catalyses S-adenosyl-L-methionine + H(+) = S-adenosyl 3-(methylsulfanyl)propylamine + CO2. It participates in amine and polyamine biosynthesis; S-adenosylmethioninamine biosynthesis; S-adenosylmethioninamine from S-adenosyl-L-methionine: step 1/1. Its function is as follows. Catalyzes the decarboxylation of S-adenosylmethionine to S-adenosylmethioninamine (dcAdoMet), the propylamine donor required for the synthesis of the polyamines spermine and spermidine from the diamine putrescine. The protein is S-adenosylmethionine decarboxylase proenzyme of Aquifex aeolicus (strain VF5).